We begin with the raw amino-acid sequence, 237 residues long: Protein VP5 (237 aa).

At 1–148 the chain is on the cytoplasmic side; the sequence is MLSIIRRKTR…TKQRCKANLR (148 aa). The segment at 84–237 is disordered; the sequence is SSSKDPDISG…SKLGKSRDIC (154 aa). Basic and acidic residues-rich tracts occupy residues 85–97 and 116–130; these read SSKD…QKDK and SRVR…HEPI. A helical transmembrane segment spans residues 149 to 165; it reads GDSGFVSIGRSNHPKLS. Residues 166 to 237 are Extracellular-facing; the sequence is REDCHNTRVP…SKLGKSRDIC (72 aa). The span at 214-231 shows a compositional bias: basic residues; sequence RSHRRKKAKTRTKTSKLG.

It is found in the host membrane. This chain is Protein VP5 (VP5), found in Drosophila x virus (isolate Chung/1996) (DXV).